Reading from the N-terminus, the 268-residue chain is Adenosylcobinamide-GDP ribazoletransferase (268 aa).

8 helical membrane passes run 1–21 (MAGN…TLPV), 36–56 (YLFI…GTLF), 59–79 (ILPA…LTGI), 112–132 (AGGL…AMTF), 138–158 (WLFV…ITII), 182–202 (LAAV…AAII), 212–232 (IMAG…ILII), and 244–264 (VIGA…GAVL).

It belongs to the CobS family. Requires Mg(2+) as cofactor.

The protein resides in the cell membrane. The catalysed reaction is alpha-ribazole + adenosylcob(III)inamide-GDP = adenosylcob(III)alamin + GMP + H(+). It carries out the reaction alpha-ribazole 5'-phosphate + adenosylcob(III)inamide-GDP = adenosylcob(III)alamin 5'-phosphate + GMP + H(+). The protein operates within cofactor biosynthesis; adenosylcobalamin biosynthesis; adenosylcobalamin from cob(II)yrinate a,c-diamide: step 7/7. Functionally, joins adenosylcobinamide-GDP and alpha-ribazole to generate adenosylcobalamin (Ado-cobalamin). Also synthesizes adenosylcobalamin 5'-phosphate from adenosylcobinamide-GDP and alpha-ribazole 5'-phosphate. This Methanocella arvoryzae (strain DSM 22066 / NBRC 105507 / MRE50) protein is Adenosylcobinamide-GDP ribazoletransferase.